Reading from the N-terminus, the 597-residue chain is Bile salt-activated lipase (597 aa).

An N-terminal signal peptide occupies residues 1 to 18 (LGASRLGPSPGCLAVASA). A disulfide bond links Cys-82 and Cys-98. An N-linked (GlcNAc...) asparagine glycan is attached at Asn-205. The active-site Acyl-ester intermediate is Ser-212. Residues Cys-264 and Cys-275 are joined by a disulfide bond. Asp-338 (charge relay system) is an active-site residue. Asn-379 carries N-linked (GlcNAc...) asparagine glycosylation. The active-site Charge relay system is His-453. Positions 553–591 (AGASLLPPEDNSQASPVPPADNSGAPTEPSAGDSEVAQM) are disordered.

This sequence belongs to the type-B carboxylesterase/lipase family. In terms of assembly, interacts with CLC.

The protein localises to the secreted. The catalysed reaction is a triacylglycerol + H2O = a diacylglycerol + a fatty acid + H(+). It carries out the reaction 1,2,3-tri-(9Z-octadecenoyl)-glycerol + H2O = di-(9Z)-octadecenoylglycerol + (9Z)-octadecenoate + H(+). It catalyses the reaction 1,2,3-trioctanoylglycerol + H2O = dioctanoylglycerol + octanoate + H(+). The enzyme catalyses a sterol ester + H2O = a sterol + a fatty acid + H(+). The catalysed reaction is cholesteryl (9Z-octadecenoate) + H2O = cholesterol + (9Z)-octadecenoate + H(+). It carries out the reaction an acetyl ester + H2O = an aliphatic alcohol + acetate + H(+). It catalyses the reaction a butanoate ester + H2O = an aliphatic alcohol + butanoate + H(+). The enzyme catalyses 9-hexadecanoyloxy-octadecanoate + H2O = 9-hydroxy-octadecanoate + hexadecanoate + H(+). The catalysed reaction is 9-(9Z-octadecenoyloxy)-octadecanoate + H2O = 9-hydroxy-octadecanoate + (9Z)-octadecenoate + H(+). It carries out the reaction 1-hexadecanoyl-sn-glycero-3-phosphocholine + H2O = sn-glycerol 3-phosphocholine + hexadecanoate + H(+). It catalyses the reaction 12-hexadecanoyloxy-octadecanoate + H2O = 12-hydroxyoctadecanoate + hexadecanoate + H(+). The enzyme catalyses 12-(9Z-octadecenoyloxy)-octadecanoate + H2O = 12-hydroxyoctadecanoate + (9Z)-octadecenoate + H(+). The catalysed reaction is 13-(9Z-octadecenoyloxy)-octadecanoate + H2O = 13-hydroxy-octadecanoate + (9Z)-octadecenoate + H(+). It carries out the reaction 9-(9Z-hexadecenoyloxy)-octadecanoate + H2O = (9Z)-hexadecenoate + 9-hydroxy-octadecanoate + H(+). It catalyses the reaction 12-(9Z-hexadecenoyloxy)-octadecanoate + H2O = 12-hydroxyoctadecanoate + (9Z)-hexadecenoate + H(+). The enzyme catalyses 13-(9Z-hexadecenoyloxy)-octadecanoate + H2O = 13-hydroxy-octadecanoate + (9Z)-hexadecenoate + H(+). The catalysed reaction is 12-octadecanoyloxy-octadecanoate + H2O = 12-hydroxyoctadecanoate + octadecanoate + H(+). It carries out the reaction 13-octadecanoyloxy-octadecanoate + H2O = 13-hydroxy-octadecanoate + octadecanoate + H(+). It catalyses the reaction 5-(9Z-hexadecenoyloxy)-octadecanoate + H2O = 5-hydroxy-octadecanoate + (9Z)-hexadecenoate + H(+). The enzyme catalyses 9-octadecanoyloxy-octadecanoate + H2O = 9-hydroxy-octadecanoate + octadecanoate + H(+). With respect to regulation, activated by bile salts such as sodium taurocholate. Its function is as follows. Catalyzes the hydrolysis of a wide range of substrates including cholesteryl esters, phospholipids, lysophospholipids, di- and tri-acylglycerols, and fatty acid esters of hydroxy fatty acids (FAHFA). Preferentially hydrolyzes FAHFAs with the ester bond further away from the carboxylate. Unsaturated FAHFAs are hydrolyzed more quickly than saturated FAHFAs. Has an essential role in the complete digestion of dietary lipids and their intestinal absorption, along with the absorption of fat-soluble vitamins. The polypeptide is Bile salt-activated lipase (CEL) (Bos taurus (Bovine)).